The following is a 75-amino-acid chain: ATP synthase subunit c (75 aa).

2 helical membrane-spanning segments follow: residues 8 to 28 (FIAI…IANI) and 52 to 72 (IGAA…MLLI).

The protein belongs to the ATPase C chain family. F-type ATPases have 2 components, F(1) - the catalytic core - and F(0) - the membrane proton channel. F(1) has five subunits: alpha(3), beta(3), gamma(1), delta(1), epsilon(1). F(0) has three main subunits: a(1), b(2) and c(10-14). The alpha and beta chains form an alternating ring which encloses part of the gamma chain. F(1) is attached to F(0) by a central stalk formed by the gamma and epsilon chains, while a peripheral stalk is formed by the delta and b chains.

It is found in the cell membrane. Functionally, f(1)F(0) ATP synthase produces ATP from ADP in the presence of a proton or sodium gradient. F-type ATPases consist of two structural domains, F(1) containing the extramembraneous catalytic core and F(0) containing the membrane proton channel, linked together by a central stalk and a peripheral stalk. During catalysis, ATP synthesis in the catalytic domain of F(1) is coupled via a rotary mechanism of the central stalk subunits to proton translocation. Its function is as follows. Key component of the F(0) channel; it plays a direct role in translocation across the membrane. A homomeric c-ring of between 10-14 subunits forms the central stalk rotor element with the F(1) delta and epsilon subunits. This chain is ATP synthase subunit c, found in Wolbachia pipientis wMel.